Reading from the N-terminus, the 374-residue chain is 4-hydroxybenzoate polyprenyltransferase, mitochondrial (374 aa).

A mitochondrion-targeting transit peptide spans 1 to 34 (MLRWGGAGLARGLRAVRSAWLRGPRGLPLALVRS). The Mitochondrial matrix segment spans residues 35–83 (AGVPGARDRRAPAPGTQRGRALSLSAAAVVNSAPRPLQPYLRLMRLDKP). The chain crosses the membrane as a helical span at residues 84 to 104 (IGTWLLYLPCTWSIGLAADPG). Residues 105 to 108 (CFPD) lie on the Mitochondrial intermembrane side of the membrane. A helical membrane pass occupies residues 109-129 (WYMLSLFGTGAILMRGAGCTI). The Mitochondrial matrix portion of the chain corresponds to 130 to 148 (NDMWDRDFDKKVTRTANRP). Residues 149–169 (IAAGDISTFQSFVFLGGQLTL) traverse the membrane as a helical segment. At 170–172 (ALG) the chain is on the mitochondrial intermembrane side. The chain crosses the membrane as a helical span at residues 173–193 (VLLCLNYYSIAMGAASLLLVV). At 194–200 (TYPLVKR) the chain is on the mitochondrial matrix side. The chain crosses the membrane as a helical span at residues 201–221 (ITFWPQLALGLTFNWGALLGW). At 222–230 (SAVKGSCDP) the chain is on the mitochondrial intermembrane side. A helical transmembrane segment spans residues 231 to 251 (AVCLPLYFSGVMWTLIYDTIY). Topologically, residues 252–277 (AHQDKKDDALIGLKSTALLFQENTRQ) are mitochondrial matrix. A helical membrane pass occupies residues 278–298 (WLSGFGVAMVAALSLAGANNG). The Mitochondrial intermembrane portion of the chain corresponds to 299–332 (QTVPYYAAVAAVGAHLAHQIYTVDIHRAEDCWDK). Residues 333–353 (FTSNRTVGMLLFLGIVLGNLC) form a helical membrane-spanning segment. The Mitochondrial matrix portion of the chain corresponds to 354 to 374 (KEKTEEAKDAEAVRVGSEQTS).

The protein belongs to the UbiA prenyltransferase family. Requires Mg(2+) as cofactor.

Its subcellular location is the mitochondrion inner membrane. The enzyme catalyses an all-trans-polyprenyl diphosphate + 4-hydroxybenzoate = a 4-hydroxy-3-(all-trans-polyprenyl)benzoate + diphosphate. It carries out the reaction all-trans-decaprenyl diphosphate + 4-hydroxybenzoate = 4-hydroxy-3-(all-trans-decaprenyl)benzoate + diphosphate. It catalyses the reaction all-trans-nonaprenyl diphosphate + 4-hydroxybenzoate = 4-hydroxy-3-(all-trans-nonaprenyl)benzoate + diphosphate. Its pathway is cofactor biosynthesis; ubiquinone biosynthesis. Mediates the second step in the final reaction sequence of coenzyme Q (CoQ) biosynthesis. Catalyzes the prenylation of para-hydroxybenzoate (PHB) with an all-trans polyprenyl donor (such as all-trans-nonaprenyl diphosphate). The length of the polyprenyl side chain varies depending on the species, in humans, the side chain is comprised of 10 isoprenyls producing CoQ10 (also known as ubiquinone), whereas rodents predominantly generate CoQ9. However, this specificity is not complete, human tissues have low amounts of CoQ9 and rodent organs contain some CoQ10. Plays a central role in the biosynthesis of CoQ9. CoQ9 is a vital molecule that transports electrons from mitochondrial respiratory chain complexes. CoQs also function as cofactors for uncoupling protein and play a role as regulators of the extracellularly-induced ceramide-dependent apoptotic pathway. Regulates mitochondrial permeability transition pore (mPTP) opening and ROS production (pivotal events in cell death) in a tissue specific manner. The polypeptide is 4-hydroxybenzoate polyprenyltransferase, mitochondrial (Mus musculus (Mouse)).